Reading from the N-terminus, the 460-residue chain is C4-dicarboxylate transport protein (460 aa).

A run of 8 helical transmembrane segments spans residues 21 to 38 (LYFQVIVAIVIGILIGHF), 53 to 75 (FIKLIKMVIAPIIFCTVVSGIAG), 88 to 110 (YALLYFEIVSTIALLIGLIVVNV), 153 to 175 (IVGAFANGDILQVLMFSVIFGFA), 196 to 218 (VMFNIINMIMKLAPIGAFGAMAF), 231 to 253 (LGQLMICFYITCVLFVVLVLGSI), 301 to 323 (VVGLVIPTGYSFNLDGTSIYLTM), and 363 to 385 (FIVLAATLSAVGHLPVAGLALIL). Residues 438–460 (PEDDLGVAEGPTPANAVNTTKTV) form a disordered region.

The protein belongs to the dicarboxylate/amino acid:cation symporter (DAACS) (TC 2.A.23) family.

It is found in the cell inner membrane. Functionally, responsible for the transport of dicarboxylates such as succinate, fumarate, and malate from the periplasm across the membrane. The sequence is that of C4-dicarboxylate transport protein from Pseudomonas syringae pv. tomato (strain ATCC BAA-871 / DC3000).